Reading from the N-terminus, the 473-residue chain is MAVKSYQAGVTQYRQSYWQPDYMPLDTDILACFKITPQPGVDREEAAAAVAAESSCGTWTTVWTDLLTDLDYYKGRAYRLEDVPGDDTCYYAFIAYPIDLFEEGSVVNVFTSLVGNVFGFKAVRALRLEDLRFPIAYVKTCGGPPHGIQVERDKLNKYGRPLLGCTIKPKLGLSAKNYGRACYEALRGGLDFTKDDENINSQPFMRWRDRFDFVMEAVQKAEQETGERKGHYLNVTAPTPEEMYKRAEYAKEIRAPIIMHDYLAGGLCANAGLANWCRNNGMLLHIHRAMHAVIDRNPHHGIHFRVLTKILRLSGGDHLHTGTVVGKLEGDRASTLGWIDLLRESFVPEDRSRGIFFDQDWGSMPGGFAVASGGIHVWHMPALVTIFGDDSVLQFGGGTLGHPWGNAAGAHANRVALEACVQARGEGRHLEKEGKDILTAAAAHSPELKIAMETWKEIKFEFETMDKLAIANK.

Residues asparagine 116 and threonine 166 each coordinate substrate. Residue lysine 168 is the Proton acceptor of the active site. Lysine 170 is a binding site for substrate. Residues lysine 194, aspartate 196, and glutamate 197 each contribute to the Mg(2+) site. Position 194 is an N6-carboxylysine (lysine 194). Histidine 287 serves as the catalytic Proton acceptor. Substrate is bound by residues arginine 288, histidine 320, and serine 372.

The protein belongs to the RuBisCO large chain family. Type I subfamily. As to quaternary structure, heterohexadecamer of 8 large chains and 8 small chains. Mg(2+) is required as a cofactor.

It catalyses the reaction 2 (2R)-3-phosphoglycerate + 2 H(+) = D-ribulose 1,5-bisphosphate + CO2 + H2O. It carries out the reaction D-ribulose 1,5-bisphosphate + O2 = 2-phosphoglycolate + (2R)-3-phosphoglycerate + 2 H(+). In terms of biological role, ruBisCO catalyzes two reactions: the carboxylation of D-ribulose 1,5-bisphosphate, the primary event in carbon dioxide fixation, as well as the oxidative fragmentation of the pentose substrate. Both reactions occur simultaneously and in competition at the same active site. This is Ribulose bisphosphate carboxylase large chain 1 from Nitrobacter winogradskyi (strain ATCC 25391 / DSM 10237 / CIP 104748 / NCIMB 11846 / Nb-255).